Here is a 450-residue protein sequence, read N- to C-terminus: Serine/threonine-protein kinase SSN3 (450 aa).

Positions 40–393 (YRIIGFISSG…AAQALQSPFF (354 aa)) constitute a Protein kinase domain. ATP is bound by residues 46–54 (ISSGTYGRV) and Lys71. Asp173 functions as the Proton acceptor in the catalytic mechanism. 2 disordered regions span residues 307–341 (ASSH…NLEK) and 418–450 (QDDN…RQKE). Positions 310-326 (HHNHHSHHHPHHHHGHY) are enriched in basic residues.

Belongs to the protein kinase superfamily. CMGC Ser/Thr protein kinase family. CDC2/CDKX subfamily. In terms of assembly, component of the SRB8-11 complex, a regulatory module of the Mediator complex. Interacts with SSN8/FCC1. Mg(2+) is required as a cofactor.

It localises to the nucleus. The enzyme catalyses L-seryl-[protein] + ATP = O-phospho-L-seryl-[protein] + ADP + H(+). It catalyses the reaction L-threonyl-[protein] + ATP = O-phospho-L-threonyl-[protein] + ADP + H(+). The catalysed reaction is [DNA-directed RNA polymerase] + ATP = phospho-[DNA-directed RNA polymerase] + ADP + H(+). Its function is as follows. Component of the SRB8-11 complex. The SRB8-11 complex is a regulatory module of the Mediator complex which is itself involved in regulation of basal and activated RNA polymerase II-dependent transcription. The SRB8-11 complex may be involved in the transcriptional repression of a subset of genes regulated by Mediator. It may inhibit the association of the Mediator complex with RNA polymerase II to form the holoenzyme complex. The SRB8-11 complex phosphorylates the C-terminal domain (CTD) of the largest subunit of RNA polymerase II. Required for normal growth and secondary metabolism. In Gibberella moniliformis (Maize ear and stalk rot fungus), this protein is Serine/threonine-protein kinase SSN3 (SSN3).